The sequence spans 886 residues: Receptor-like kinase TMK2 (886 aa).

The signal sequence occupies residues 1–20 (MIAKNFLLLLCFIALVNVES). The Extracellular segment spans residues 21–460 (SPDEAVMIAL…GKKASSNAGK (440 aa)). Asn41 carries N-linked (GlcNAc...) asparagine glycosylation. A disulfide bridge connects residues Cys48 and Cys56. LRR repeat units follow at residues 59–83 (SNRVTAIQIGDRGISGKLPPDLGKL), 84–106 (TSLTKFEVMRNRLTGPIPSLAGL), 107–129 (KSLVTVYANDNDFTSVPEDFFSG), 131–155 (SSLQHVSLDNNPFDSWVIPPSLENA), 157–179 (SLVDFSAVNCNLSGKIPDYLFEG), 182–206 (FSSLTTLKLSYNSLVCEFPMNFSDS), 208–232 (VQVLMLNGQKGREKLHGSISFLQKM), 233–254 (TSLTNVTLQGNSFSGPLPDFSG), 255–279 (LVSLKSFNVRENQLSGLVPSSLFEL), and 281–302 (SLSDVALGNNLLQGPTPNFTAP). 3 N-linked (GlcNAc...) asparagine glycosylation sites follow: Asn154, Asn167, and Asn202. N-linked (GlcNAc...) asparagine glycosylation is present at Asn237. Residue Asn298 is glycosylated (N-linked (GlcNAc...) asparagine). 2 cysteine pairs are disulfide-bonded: Cys315-Cys323 and Cys353-Cys361. 3 LRR repeats span residues 363–386 (GTDITVINFKNLGLNGTISPRFAD), 387–410 (FASLRVINLSQNNLNGTIPQELAK), and 411–438 (LSNLKTLDVSKNRLCGEVPRFNTTIVNT). Residues Asn377, Asn394, Asn401, Asn432, and Asn437 are each glycosylated (N-linked (GlcNAc...) asparagine). A helical transmembrane segment spans residues 461–481 (IVGSVIGILLALLLIGVAIFF). At 482–886 (LVKKKMQYHK…ESTFKSGQGR (405 aa)) the chain is on the cytoplasmic side. In terms of domain architecture, Protein kinase spans 547 to 827 (FDEKNILGRG…HVVNVLVSLV (281 aa)). Residues 553–561 (LGRGGFGIV) and Lys575 contribute to the ATP site. The active-site Proton acceptor is the Asp676.

Belongs to the protein kinase superfamily. Ser/Thr protein kinase family. Expressed in siliques and flowers.

The protein localises to the membrane. It catalyses the reaction L-seryl-[protein] + ATP = O-phospho-L-seryl-[protein] + ADP + H(+). It carries out the reaction L-threonyl-[protein] + ATP = O-phospho-L-threonyl-[protein] + ADP + H(+). Its function is as follows. Involved in auxin signal transduction and cell expansion and proliferation regulation. The chain is Receptor-like kinase TMK2 from Arabidopsis thaliana (Mouse-ear cress).